The sequence spans 430 residues: Arrestin-related trafficking adapter 10 (430 aa).

A disordered region spans residues 55–75 (AEADRHSSRLPQDPQTQYTKE). The segment covering 63–72 (RLPQDPQTQY) has biased composition (polar residues).

It belongs to the ART10 family.

It is found in the cytoplasm. May regulate endocytosis by recruiting RSP5 ubiquitin ligase activity to specific plasma membrane proteins in response to extracellular stimuli. This is Arrestin-related trafficking adapter 10 (ART10) from Eremothecium gossypii (strain ATCC 10895 / CBS 109.51 / FGSC 9923 / NRRL Y-1056) (Yeast).